We begin with the raw amino-acid sequence, 1238 residues long: Protein translocase subunit SecA 1 (1238 aa).

ATP is bound by residues Gln-107, 125–129 (GEGKT), and Asp-570. Residues 1194-1220 (AAGSEGRAEGSVDTVRVEEPRIGRNAP) form a disordered region. The segment covering 1199–1215 (GRAEGSVDTVRVEEPRI) has biased composition (basic and acidic residues). 4 residues coordinate Zn(2+): Cys-1221, Cys-1223, Cys-1232, and Cys-1233.

The protein belongs to the SecA family. Monomer and homodimer. Part of the essential Sec protein translocation apparatus which comprises SecA, SecYEG and auxiliary proteins SecDF. Other proteins may also be involved. Zn(2+) serves as cofactor.

It is found in the cell inner membrane. It localises to the cytoplasm. The enzyme catalyses ATP + H2O + cellular proteinSide 1 = ADP + phosphate + cellular proteinSide 2.. Functionally, part of the Sec protein translocase complex. Interacts with the SecYEG preprotein conducting channel. Has a central role in coupling the hydrolysis of ATP to the transfer of proteins into and across the cell membrane, serving as an ATP-driven molecular motor driving the stepwise translocation of polypeptide chains across the membrane. This is Protein translocase subunit SecA 1 from Rhodopirellula baltica (strain DSM 10527 / NCIMB 13988 / SH1).